The chain runs to 172 residues: Methylated-DNA--protein-cysteine methyltransferase (172 aa).

C142 functions as the Nucleophile; methyl group acceptor in the catalytic mechanism.

Belongs to the MGMT family.

The protein resides in the cytoplasm. The catalysed reaction is a 6-O-methyl-2'-deoxyguanosine in DNA + L-cysteinyl-[protein] = S-methyl-L-cysteinyl-[protein] + a 2'-deoxyguanosine in DNA. The enzyme catalyses a 4-O-methyl-thymidine in DNA + L-cysteinyl-[protein] = a thymidine in DNA + S-methyl-L-cysteinyl-[protein]. Functionally, involved in the cellular defense against the biological effects of O6-methylguanine (O6-MeG) and O4-methylthymine (O4-MeT) in DNA. Repairs the methylated nucleobase in DNA by stoichiometrically transferring the methyl group to a cysteine residue in the enzyme. This is a suicide reaction: the enzyme is irreversibly inactivated. This is Methylated-DNA--protein-cysteine methyltransferase from Pyrococcus horikoshii (strain ATCC 700860 / DSM 12428 / JCM 9974 / NBRC 100139 / OT-3).